The chain runs to 45 residues: Putative potassium channel blocker (45 aa).

Expressed by the venom gland.

The protein localises to the secreted. In terms of biological role, inhibits potassium channels. The chain is Putative potassium channel blocker from Hottentotta tamulus (Eastern Indian scorpion).